Here is a 75-residue protein sequence, read N- to C-terminus: Translational regulator CsrA (75 aa).

This sequence belongs to the CsrA/RsmA family. Homodimer; the beta-strands of each monomer intercalate to form a hydrophobic core, while the alpha-helices form wings that extend away from the core.

It localises to the cytoplasm. Functionally, a translational regulator that binds mRNA to regulate translation initiation and/or mRNA stability. Usually binds in the 5'-UTR at or near the Shine-Dalgarno sequence preventing ribosome-binding, thus repressing translation. Its main target seems to be the major flagellin gene, while its function is anatagonized by FliW. The chain is Translational regulator CsrA from Thermosipho melanesiensis (strain DSM 12029 / CIP 104789 / BI429).